The following is a 395-amino-acid chain: Putative 8-amino-7-oxononanoate synthase (395 aa).

Arg23 contributes to the substrate binding site. 110 to 111 (GY) is a binding site for pyridoxal 5'-phosphate. His135 provides a ligand contact to substrate. Pyridoxal 5'-phosphate is bound by residues Ser182, 207–210 (DEAH), and 239–242 (TFSK). Lys242 carries the N6-(pyridoxal phosphate)lysine modification. Thr356 lines the substrate pocket.

Belongs to the class-II pyridoxal-phosphate-dependent aminotransferase family. BioF subfamily. In terms of assembly, homodimer. Requires pyridoxal 5'-phosphate as cofactor.

The catalysed reaction is 6-carboxyhexanoyl-[ACP] + L-alanine + H(+) = (8S)-8-amino-7-oxononanoate + holo-[ACP] + CO2. The protein operates within cofactor biosynthesis; biotin biosynthesis. Catalyzes the decarboxylative condensation of pimeloyl-[acyl-carrier protein] and L-alanine to produce 8-amino-7-oxononanoate (AON), [acyl-carrier protein], and carbon dioxide. The polypeptide is Putative 8-amino-7-oxononanoate synthase (bioF) (Bacillus cereus (strain ZK / E33L)).